The following is a 142-amino-acid chain: Large ribosomal subunit protein uL13 (142 aa).

It belongs to the universal ribosomal protein uL13 family. Part of the 50S ribosomal subunit.

Its function is as follows. This protein is one of the early assembly proteins of the 50S ribosomal subunit, although it is not seen to bind rRNA by itself. It is important during the early stages of 50S assembly. In Vibrio atlanticus (strain LGP32) (Vibrio splendidus (strain Mel32)), this protein is Large ribosomal subunit protein uL13.